A 606-amino-acid chain; its full sequence is Scavenger receptor class A member 3 (606 aa).

Over 1-56 the chain is Cytoplasmic; the sequence is MKVRSAGSDRDVLCVTEEDLAGEDEDMPSFPCTQEGRAGPRCNRCQKNLSLHTSVR. The chain crosses the membrane as a helical; Signal-anchor for type II membrane protein span at residues 57 to 77; it reads ILYLFLTLLLVAVAVLASLVF. At 78–606 the chain is on the extracellular side; it reads RKVDSLSEDI…PGPPGNQSPY (529 aa). N-linked (GlcNAc...) asparagine glycans are attached at residues Asn-115, Asn-182, Asn-224, Asn-257, Asn-313, Asn-337, Asn-365, Asn-400, Asn-430, and Asn-451. Positions 455 to 606 are disordered; that stretch reads IRGVPGPPGP…PGPPGNQSPY (152 aa). 2 consecutive Collagen-like domains span residues 456–558 and 559–601; these read RGVP…PGPS and GPQG…GPPG. Residues 497–516 are compositionally biased toward low complexity; that stretch reads PQGQPGEPGPVGERGPAGPR. The span at 526–535 shows a compositional bias: gly residues; the sequence is GSFGTGGPRG. Pro residues-rich tracts occupy residues 548-558 and 591-606; these read PEGPPGSPGPS and PGLPGPPGPPGNQSPY.

Its subcellular location is the endoplasmic reticulum membrane. The protein localises to the golgi apparatus membrane. Its function is as follows. Seems to protect cells by scavenging oxidative molecules or harmful products of oxidation. This Mus musculus (Mouse) protein is Scavenger receptor class A member 3 (Scara3).